Here is a 119-residue protein sequence, read N- to C-terminus: Putative mating-type protein A2 (119 aa).

The homeobox; TALE-type DNA-binding region spans 38 to 100; that stretch reads KPYRGHRFTK…NRRRKEKTIT (63 aa).

This sequence belongs to the TALE/M-ATYP homeobox family.

The protein localises to the nucleus. Functionally, probably not a functional protein. Cells lacking A2 show no obvious alterations in mating, sporulation and cell growth. This Saccharomyces cerevisiae (Baker's yeast) protein is Putative mating-type protein A2 (MATA2).